Here is a 163-residue protein sequence, read N- to C-terminus: Nucleotide-binding protein APJL_1242 (163 aa).

The protein belongs to the YajQ family.

Its function is as follows. Nucleotide-binding protein. This is Nucleotide-binding protein APJL_1242 from Actinobacillus pleuropneumoniae serotype 3 (strain JL03).